Reading from the N-terminus, the 277-residue chain is R-spondin-3 (277 aa).

The N-terminal stretch at 1–21 is a signal peptide; sequence MHLRLISCFFIILNFMEYIGS. FU repeat units follow at residues 35–86 and 92–135; these read PNVS…GYYG and INKC…GLEA. The N-linked (GlcNAc...) asparagine glycan is linked to N36. 11 disulfides stabilise this stretch: C41–C48, C45–C54, C57–C76, C80–C95, C98–C105, C102–C111, C114–C125, C129–C142, C148–C190, C159–C166, and C199–C206. The TSP type-1 domain maps to 147–207; it reads HCEASEWSPW…TCIVQRKKCS (61 aa). Residues 210–277 are disordered; it reads ERGKKGRERK…QKSVSVSTVH (68 aa). Residues 213–223 show a composition bias toward basic residues; it reads KKGRERKRKKL. The span at 232–245 shows a compositional bias: low complexity; it reads SSSSDSKGLESSIE.

This sequence belongs to the R-spondin family. Interacts with the extracellular domain of FZD8 and LRP6. It however does not form a ternary complex with FZD8 and LRP6. Interacts with WNT1. Binds heparin. Interacts with LGR4, LGR5 and LGR6. In terms of tissue distribution, highly expressed in endothelial cells.

It localises to the secreted. Functionally, activator of the canonical Wnt signaling pathway by acting as a ligand for LGR4-6 receptors, which acts as a key regulator of angiogenesis. Upon binding to LGR4-6 (LGR4, LGR5 or LGR6), LGR4-6 associate with phosphorylated LRP6 and frizzled receptors that are activated by extracellular Wnt receptors, triggering the canonical Wnt signaling pathway to increase expression of target genes. Also regulates the canonical Wnt/beta-catenin-dependent pathway and non-canonical Wnt signaling by acting as an inhibitor of ZNRF3, an important regulator of the Wnt signaling pathway. Acts as a ligand for frizzled FZD8 and LRP6. May negatively regulate the TGF-beta pathway. Acts as a key regulator of angiogenesis by controlling vascular stability and pruning: acts by activating the non-canonical Wnt signaling pathway in endothelial cells. Can also amplify Wnt signaling pathway independently of LGR4-6 receptors, possibly by acting as a direct antagonistic ligand to RNF43 and ZNRF3. The chain is R-spondin-3 (Rspo3) from Mus musculus (Mouse).